Here is a 228-residue protein sequence, read N- to C-terminus: MASSTLSPVTQLCSSKSGLSSVSQCLLLKPMKINSHGLGKDKRMKVKCMATSIPADDRVPDMEKRNLMNLLLLGALSLPTAGMLVPYATFFAPPGSGGGSGGTPAKDALGNDVIASEWLKTHPPGNRTLTQGLKGDPTYLVVENDGTLATYGINAVCTHLGCVVPFNAAENKFICPCHGSQYNNQGRVVRGPAPLSLALAHADIDDGKVVFVPWVETDFRTGEAPWWA.

The N-terminal 49 residues, methionine 1 to methionine 49, are a transit peptide targeting the chloroplast. Residues leucine 71–phenylalanine 91 form a helical membrane-spanning segment. Residues alanine 115 to phenylalanine 211 enclose the Rieske domain. [2Fe-2S] cluster contacts are provided by cysteine 157, histidine 159, cysteine 175, and histidine 178. Cysteine 162 and cysteine 177 are oxidised to a cystine.

Belongs to the Rieske iron-sulfur protein family. As to quaternary structure, the 4 large subunits of the cytochrome b6-f complex are cytochrome b6, subunit IV (17 kDa polypeptide, petD), cytochrome f and the Rieske protein, while the 4 small subunits are petG, petL, petM and petN. The complex functions as a dimer. [2Fe-2S] cluster is required as a cofactor.

Its subcellular location is the plastid. It is found in the chloroplast thylakoid membrane. It carries out the reaction 2 oxidized [plastocyanin] + a plastoquinol + 2 H(+)(in) = 2 reduced [plastocyanin] + a plastoquinone + 4 H(+)(out). Component of the cytochrome b6-f complex, which mediates electron transfer between photosystem II (PSII) and photosystem I (PSI), cyclic electron flow around PSI, and state transitions. The protein is Cytochrome b6-f complex iron-sulfur subunit 2, chloroplastic (petC2) of Nicotiana tabacum (Common tobacco).